The following is a 345-amino-acid chain: L-threonine 3-dehydrogenase (345 aa).

Position 38 (cysteine 38) interacts with Zn(2+). Catalysis depends on charge relay system residues threonine 40 and histidine 43. The Zn(2+) site is built by histidine 63, glutamate 64, cysteine 93, cysteine 96, cysteine 99, and cysteine 107. Residues isoleucine 176, aspartate 196, arginine 201, 263-265 (LGT), and 287-288 (VT) contribute to the NAD(+) site.

It belongs to the zinc-containing alcohol dehydrogenase family. In terms of assembly, homotetramer. Requires Zn(2+) as cofactor.

The protein resides in the cytoplasm. The catalysed reaction is L-threonine + NAD(+) = (2S)-2-amino-3-oxobutanoate + NADH + H(+). The protein operates within amino-acid degradation; L-threonine degradation via oxydo-reductase pathway; glycine from L-threonine: step 1/2. In terms of biological role, catalyzes the NAD(+)-dependent oxidation of L-threonine to 2-amino-3-ketobutyrate. In Cutibacterium acnes (strain DSM 16379 / KPA171202) (Propionibacterium acnes), this protein is L-threonine 3-dehydrogenase.